We begin with the raw amino-acid sequence, 416 residues long: Phakinin (416 aa).

The disordered stretch occupies residues 1–48; sequence MSERRVAMDLPSGSNASMPLQRHRVSSLRGTRSPSSLDSPPASRTSAV. Residue S2 is modified to N-acetylserine. Residues 2 to 115 form a head region; it reads SERRVAMDLP…HATAEDLGGC (114 aa). Phosphoserine occurs at positions 27, 33, 36, and 91. Over residues 28 to 48 the composition is skewed to polar residues; sequence LRGTRSPSSLDSPPASRTSAV. Residues 105 to 416 enclose the IF rod domain; the sequence is NHATAEDLGG…HALLDREESN (312 aa). 2 coiled-coil regions span residues 199 to 240 and 314 to 391; these read FRKA…SLSR and LAAA…ERAH. The tail stretch occupies residues 397–416; sequence GQLQKDVASYHALLDREESN.

It belongs to the intermediate filament family. In terms of assembly, part of a complex required for lens intermediate filament formation composed of BFSP1, BFSP2, and CRYAA. Found in a complex composed of PPL (via C-terminal linker domain), BFSP1 and BFSP2 in the retinal lens. Within the complex interacts with PPL (via C-terminal linker domain) and with BFSP1. Identified in a complex that contains VIM, EZR, AHNAK, BFSP1, BFSP2, ANK2, PLEC, PRX and spectrin. Interacts with LGSN. Interacts with VIM. Expressed in the deep and shallow cortices of the retina lens (at protein level).

The protein localises to the cell membrane. It is found in the cytoplasm. It localises to the cytoskeleton. Its subcellular location is the cell cortex. Functionally, required for the correct formation of lens intermediate filaments as part of a complex composed of BFSP1, BFSP2 and CRYAA. Plays a role in maintenance of retinal lens optical clarity. The sequence is that of Phakinin from Rattus norvegicus (Rat).